We begin with the raw amino-acid sequence, 443 residues long: EGF-containing fibulin-like extracellular matrix protein 2 (443 aa).

A signal peptide spans 1 to 23; sequence MLPCASCLPGSLLLWALLLLLLG. One can recognise an EGF-like 1; atypical domain in the interval 36–81; it reads YTECTDGYEWDPDSQHCRDVNECLTIPEACKGEMKCINHYGGYLCL. 18 disulfides stabilise this stretch: C58–C121, C65–C80, C71–C109, C127–C140, C134–C149, C151–C162, C168–C177, C173–C186, C188–C201, C207–C217, C213–C226, C228–C241, C247–C258, C254–C267, C269–C281, C287–C300, C294–C309, and C315–C327. The 41-residue stretch at 123–163 folds into the EGF-like 2; calcium-binding domain; the sequence is DVDECAQALHDCRPSQDCHNLPGSYQCTCPDGYRKIGPECV. The EGF-like 3; calcium-binding domain maps to 164 to 202; sequence DIDECRYRYCQHRCVNLPGSFRCQCEPGFQLGPNNRSCV. The N-linked (GlcNAc...) asparagine glycan is linked to N198. One can recognise an EGF-like 4; calcium-binding domain in the interval 203–242; it reads DVNECDMGAPCEQRCFNSYGTFLCRCHQGYELHRDGFSCS. Positions 243–282 constitute an EGF-like 5; calcium-binding domain; it reads DIDECSYSSYLCQYRCINEPGRFSCHCPQGYQLLATRLCQ. In terms of domain architecture, EGF-like 6; calcium-binding spans 283-328; sequence DIDECESGAHQCSEAQTCVNFHGGYRCVDTNRCVEPYIQVSENRCL. The N-linked (GlcNAc...) asparagine glycan is linked to N394.

The protein belongs to the fibulin family. As to quaternary structure, homodimer; disulfide-linked. Multimer; allows heparin binding. Monomer. Interacts with FBN1 (via N-terminal domain); this interaction inhibits EFEMP2 binding to LOX and ELN. Interacts with LOX (via propeptide); this interaction is strong and facilitates formation of ternary complexes with ELN during elastic fiber assembly; this interaction limits interaction of EFEMP2 with FBLN5. Interacts with PITX2. Interacts with ELN with moderate affinity; this interaction regulates ELN self-assembly maturation stage. Interacts with FBLN5 with moderate affinity. Interacts with LOXL1 (via propeptide), LTBP1 and TGFB1 stronger than with LOXL2 and LTBP3. Interacts with PCOLCE. Interacts with collagen type IV trimer (COL4A1-COL4A1-COL4A2), NID2 and moderately with COL15A1-derived endostatin. Interacts with EMILIN1; this interaction promotes the incorporation of EFEMP2 into the extracellular matrix. Interacts with LTBP4; the LTBP4 long form (LTBP4L) has a stronger binding affinity than the LTBP4 short form and the LTBP4 long form promotes fibrillar deposition of EFEMP2. In terms of processing, N-glycosylated; contains mostly complex-type glycans. Not O-glycosylated. Cleaved by ELANE; produces a 50-55 kDa fragment. Cleaved by MMP2 and MMP9; produces several fragments.

The protein resides in the secreted. The protein localises to the extracellular space. It is found in the extracellular matrix. Its subcellular location is the basement membrane. Plays a crucial role in elastic fiber formation in tissue, and in the formation of ultrastructural connections between elastic laminae and smooth muscle cells in the aorta, therefore participates in terminal differentiation and maturation of smooth muscle cell (SMC) and in the mechanical properties and wall integrity maintenance of the aorta. In addition, is involved in the control of collagen fibril assembly in tissue throught proteolytic activation of LOX leading to cross- linking of collagen and elastin. Also promotes ELN coacervation and participates in the deposition of ELN coacervates on to microfibrils but also regulates ELN cross- linking through LOX interaction. Moreover adheres to the cells through heparin binding in a calcium-dependent manner and regulates vascularlar smooth muscle cells proliferation through angiotensin signaling. The polypeptide is EGF-containing fibulin-like extracellular matrix protein 2 (Homo sapiens (Human)).